The following is a 465-amino-acid chain: Calcitonin gene-related peptide type 1 receptor (465 aa).

Residues 1–17 form the signal peptide; that stretch reads MVICLLLCTPTDIFVVA. Residues 18–141 are Extracellular-facing; the sequence is SPEVNETQEY…HTNEGRMTAM (124 aa). 4 N-linked (GlcNAc...) asparagine glycosylation sites follow: Asn22, Asn68, Asn120, and Asn125. Cystine bridges form between Cys50-Cys76, Cys67-Cys107, and Cys90-Cys129. Residues 142–166 form a helical membrane-spanning segment; sequence NLFYLALIGHGLSLTSLLISLGIFF. Topologically, residues 167–177 are cytoplasmic; sequence YFKSLSCQRIT. Residues 178–200 traverse the membrane as a helical segment; it reads LHKNLFFSFVLNSVITIIWLTAV. The Extracellular segment spans residues 201 to 211; that stretch reads ANNQELVQRNP. Residues 212–240 traverse the membrane as a helical segment; sequence TSCKVSQFIHLYLFGCNYFWMLCEGIYLH. Topologically, residues 241–254 are cytoplasmic; that stretch reads TLIVVAVFAEKQHL. A helical membrane pass occupies residues 255–275; sequence MWYYLLGWGFPLIPASIHAIA. Over 276 to 291 the chain is Extracellular; the sequence is RSYYYNDNCWISSNTS. A glycan (N-linked (GlcNAc...) asparagine) is linked at Asn289. Residues 292-316 form a helical membrane-spanning segment; the sequence is LLYIIHGPICAALLVNLFFLLNIVR. The Cytoplasmic portion of the chain corresponds to 317-331; the sequence is VLITKLKVTHQAESS. The helical transmembrane segment at 332 to 353 threads the bilayer; sequence LYMKAVRATLILVPLLGIQYVL. At 354 to 368 the chain is on the extracellular side; that stretch reads LPYKPEGRVSSEIYD. A helical transmembrane segment spans residues 369–389; it reads YIMHILMHYQGLLVATIFCFF. Residues 390–465 lie on the Cytoplasmic side of the membrane; the sequence is NGEVQGVLRR…SILKSENPFT (76 aa).

The protein belongs to the G-protein coupled receptor 2 family.

The protein localises to the cell membrane. May function as G protein-coupled receptor for calcitonin-gene-related peptides and adrenomedullin. Specificity may be modulated by accessory proteins. May activate cAMP-dependent pathway. The chain is Calcitonin gene-related peptide type 1 receptor (calcrl) from Oncorhynchus gorbuscha (Pink salmon).